A 134-amino-acid polypeptide reads, in one-letter code: Profilin-2 (134 aa).

A disulfide bridge links C13 with C118. The Involved in PIP2 interaction signature appears at 84-100; it reads AVIRGKKGSGGITIKKT. T114 is modified (phosphothreonine).

It belongs to the profilin family. In terms of processing, phosphorylated by MAP kinases.

The protein localises to the cytoplasm. Its subcellular location is the cytoskeleton. This is Profilin-2 from Olea europaea (Common olive).